The following is a 720-amino-acid chain: MIKIADFTLFFFIFVFSPSLPLAQSQLPDLDPQDKASLLIFRVSIHDLNRSLSTWYGSSCSNWTGLACQNPTGKVLSLTLSGLNLSSQIHPSLCKLSSLQSLDLSHNNFSGNIPSCFGSLRNLRTLNLSRNRFVGSIPATFVSLKELREVVLSENRDLGGVVPHWFGNFSMNLERVDFSFCSFVGELPESLLYLKSLKYLNLESNNMTGTLRDFQQPLVVLNLASNQFSGTLPCFYASRPSLSILNIAENSLVGGLPSCLGSLKELSHLNLSFNGFNYEISPRLMFSEKLVMLDLSHNGFSGRLPSRISETTEKLGLVLLDLSHNSFSGDIPLRITELKSLQALRLSHNLLTGDIPARIGNLTYLQVIDLSHNALTGSIPLNIVGCFQLLALMISNNNLSGEIQPELDALDSLKILDISNNHISGEIPLTLAGLKSLEIVDISSNNLSGNLNEAITKWSNLKYLSLARNKFSGTLPSWLFKFDKIQMIDYSSNRFSWFIPDDNLNSTRFKDFQTGGGEGFAEPPGKVEIKISAAVVAKDELSFSYNLLSMVGIDLSDNLLHGEIPEALFRQKNIEYLNLSYNFLEGQLPRLEKLPRLKALDLSHNSLSGQVIGNISAPPGLTLLNLSHNCFSGIITEKEGLGKFPGALAGNPELCVETPGSKCDPANIDASQEEIYQNELVEGPISIWIFCLSAFISFDFGVLGIFCSARARSYILQTKA.

The signal sequence occupies residues 1 to 25; it reads MIKIADFTLFFFIFVFSPSLPLAQS. Residues 26–92 form an N-cap region; sequence QLPDLDPQDK…LNLSSQIHPS (67 aa). At 26 to 686 the chain is on the extracellular side; it reads QLPDLDPQDK…QNELVEGPIS (661 aa). Asparagine 49, asparagine 62, asparagine 84, asparagine 108, asparagine 127, and asparagine 168 each carry an N-linked (GlcNAc...) asparagine glycan. Cysteine 60 and cysteine 68 are joined by a disulfide. 21 LRR repeats span residues 96–122, 124–144, 146–168, 170–194, 195–217, 219–238, 239–263, 264–287, 288–311, 314–338, 339–362, 364–386, 388–410, 411–436, 438–458, 459–482, 484–506, 547–571, 573–594, 595–617, and 619–641; these read LSSL…SLRN, RTLN…FVSL, ELRE…WFGN, SMNL…LLYL, KSLK…FQQP, VVLN…FYAS, RPSL…LGSL, KELS…LMFS, EKLV…ISET, KLGL…ITEL, KSLQ…IGNL, YLQV…IVGC, QLLA…LDAL, DSLK…GLKS, EIVD…ITKW, SNLK…LFKF, KIQM…NLNS, LLSM…LFRQ, NIEY…LEKL, PRLK…NISA, and PGLT…KEGL. An N-linked (GlcNAc...) asparagine glycan is attached at asparagine 206. Residue asparagine 270 is glycosylated (N-linked (GlcNAc...) asparagine). Asparagine 361 carries N-linked (GlcNAc...) asparagine glycosylation. An N-linked (GlcNAc...) asparagine glycan is attached at asparagine 398. N-linked (GlcNAc...) asparagine glycosylation is present at asparagine 446. Residue asparagine 505 is glycosylated (N-linked (GlcNAc...) asparagine). N-linked (GlcNAc...) asparagine glycosylation is found at asparagine 578, asparagine 614, and asparagine 625. The tract at residues 649 to 682 is C-cap/acidic domain; sequence AGNPELCVETPGSKCDPANIDASQEEIYQNELVE. A helical transmembrane segment spans residues 687 to 707; that stretch reads IWIFCLSAFISFDFGVLGIFC. Topologically, residues 708–720 are cytoplasmic; that stretch reads SARARSYILQTKA.

The protein belongs to the RLP family. As to quaternary structure, parts of a tetrameric complex made of two CLV2/CRN heterodimers that can interact with CLV3 and CLE peptides. CLV2/CRN heterodimer interacts with CLV1 homodimers. Interacts with CRN; this dimer can interact with BAM3. Interacts with CLE14. Mostly expressed in apices (e.g. shoot apical meristem and flower buds), and, to a lower extent, in flowers, leaves, seedlings and siliques. Also expressed in the inner tissues of the proximal root meristem. Expressed throughout the vascular cylinder of root tips.

The protein resides in the cell membrane. The protein localises to the endoplasmic reticulum membrane. In terms of biological role, involved in the perception of CLV3 and CLV3-like (CLE) peptides, that act as extracellular signals regulating meristems maintenance. Required for the sensing of the root CLE peptides (e.g. CLE8, CLE9/CLE10, CLE11, CLE13, CLE14, CLE16, CLE17, CLE18, CLE20, CLE21, CLE25, CLE26, CLE40, CLE41/CLE44 and CLE45), which also involves CRN and leads to root growth regulation, mostly in the phloem and protophloem. Involved in controlling the stem cell population size in shoot and root apical meristems, and during organ development. Promotes the formation of CLV1 multimers. In complex with CRN, perceives secreted CLV3-like effector proteins from plant-parasitic cyst nematodes as ligand mimics of the plant CLE signaling pathway. This recognition is required for proper feeding structure (syncytium) development and ultimately successful nematode infection. CLE14 perception by CLV2/CRN complex triggers root meristem differentiation. In Arabidopsis thaliana (Mouse-ear cress), this protein is Receptor-like protein CLAVATA2.